Reading from the N-terminus, the 1117-residue chain is Protein rliB (1117 aa).

A signal peptide spans 1–23 (MKNINNKILKIFILFLAICSVKS). N-linked (GlcNAc...) asparagine glycosylation is found at Asn136, Asn195, Asn279, and Asn318. Positions 266 to 392 (STWSNNLVPQ…YHNSWTKLAS (127 aa)) constitute a G8 domain. PbH1 repeat units follow at residues 522–544 (VQKS…TIHG) and 545–567 (TNNL…YLED). 2 N-linked (GlcNAc...) asparagine glycosylation sites follow: Asn547 and Asn605. A PbH1 3 repeat occupies 621 to 642 (NAYNTIIGNSASGGWAGFSFPN). N-linked (GlcNAc...) asparagine glycosylation is found at Asn728, Asn845, Asn1030, Asn1044, Asn1091, and Asn1107.

Belongs to the comF family.

The protein localises to the secreted. The protein is Protein rliB (rliB) of Dictyostelium discoideum (Social amoeba).